A 101-amino-acid chain; its full sequence is MMTEHVLILSAYLFSIGIYGLITSRNMVRALMCLELILNAVNLNLVTFSDLFDSRQLKGDIFSIFVIAIAAAEAAIGPAIVSSIYRNRKSTRINQSNLLNK.

Helical transmembrane passes span 2 to 22 (MTEHVLILSAYLFSIGIYGLI), 32 to 52 (MCLELILNAVNLNLVTFSDLF), and 61 to 81 (IFSIFVIAIAAAEAAIGPAIV).

Belongs to the complex I subunit 4L family. In terms of assembly, NDH is composed of at least 16 different subunits, 5 of which are encoded in the nucleus.

The protein resides in the plastid. The protein localises to the chloroplast thylakoid membrane. The catalysed reaction is a plastoquinone + NADH + (n+1) H(+)(in) = a plastoquinol + NAD(+) + n H(+)(out). The enzyme catalyses a plastoquinone + NADPH + (n+1) H(+)(in) = a plastoquinol + NADP(+) + n H(+)(out). In terms of biological role, NDH shuttles electrons from NAD(P)H:plastoquinone, via FMN and iron-sulfur (Fe-S) centers, to quinones in the photosynthetic chain and possibly in a chloroplast respiratory chain. The immediate electron acceptor for the enzyme in this species is believed to be plastoquinone. Couples the redox reaction to proton translocation, and thus conserves the redox energy in a proton gradient. The chain is NAD(P)H-quinone oxidoreductase subunit 4L, chloroplastic from Liriodendron tulipifera (Tuliptree).